Here is a 988-residue protein sequence, read N- to C-terminus: Chloride channel protein 1 (988 aa).

Residues 1 to 118 (MEQSRSQQRG…VVRRKLGEDG (118 aa)) are Cytoplasmic-facing. The segment covering 65–75 (HKEQFSDREQD) has biased composition (basic and acidic residues). The disordered stretch occupies residues 65–92 (HKEQFSDREQDIGMPKKTGSSSTVDSKD). Residues 119 to 150 (IFLVLLGLLMALVSWSMDYVSAKSLQAYKWSY) traverse the membrane as a helical segment. Residues 151–158 (AQMQPSLP) are Extracellular-facing. The helical transmembrane segment at 159-179 (LQFLVWVTFPLVLILFSALFC) threads the bilayer. Residues 180-183 (HLIS) are Cytoplasmic-facing. An intramembrane region (note=Loop between two helices) is located at residues 184 to 189 (PQAVGS). Positions 188–192 (GSGIP) match the Selectivity filter part_1 motif. Ser-189 contacts chloride. Residues 190–195 (GIPEMK) constitute an intramembrane region (helical). Topologically, residues 196-208 (TILRGVVLKEYLT) are cytoplasmic. An intramembrane region (helical) is located at residues 209 to 224 (MKAFVAKVVALTAGLG). Residues 225–230 (SGIPVG) constitute an intramembrane region (note=Loop between two helices). The short motif at 230–234 (GKEGP) is the Selectivity filter part_2 element. The helical intramembrane region spans 231–246 (KEGPFVHIASICAAVL). Residues 247-268 (SKFMSVFCGVYEQPYYYSDILT) lie on the Cytoplasmic side of the membrane. Intramembrane regions (helical) lie at residues 269–280 (VGCAVGVGCCFG) and 281–290 (TPLGGVLFSI). The Cytoplasmic portion of the chain corresponds to 291–301 (EVTSTYFAVRN). A helical membrane pass occupies residues 302-321 (YWRGFFAATFSAFVFRVLAV). Over 322–347 (WNKDAVTITALFRTNFRMDFPFDLKE) the chain is Extracellular. The chain crosses the membrane as a helical span at residues 348–376 (LPAFAAIGICCGLLGAVFVYLHRQVMLGV). The Cytoplasmic portion of the chain corresponds to 377 to 390 (RKHKALSQFLAKHR). The helical transmembrane segment at 391-408 (LLYPGIVTFVIASFTFPP) threads the bilayer. Topologically, residues 409 to 414 (GMGQFM) are extracellular. An intramembrane region (note=Loop between two helices) is located at residues 415–418 (AGEL). The helical intramembrane region spans 419–426 (MPREAIST). The Extracellular portion of the chain corresponds to 427–457 (LFDNNTWVKHAGDPESLGQSAVWIHPRVNVV). Residues 458–475 (IIIFLFFVMKFWMSIVAT) constitute an intramembrane region (helical). The segment at residues 476 to 482 (TMPIPCG) is an intramembrane region (note=Loop between two helices). A Selectivity filter part_3 motif is present at residues 482–486 (GGFMP). Positions 483-498 (GFMPVFVLGAAFGRLV) form an intramembrane region, helical. Position 484 (Phe-484) interacts with chloride. At 499-521 (GEIMAMLFPDGILFDDIIYKILP) the chain is on the extracellular side. Positions 522–538 (GGYAVIGAAALTGAVSH) form an intramembrane region, helical. The segment at residues 539–540 (TV) is an intramembrane region (note=Loop between two helices). Residues 541–554 (STAVICFELTGQIA) constitute an intramembrane region (helical). Residues 555–557 (HIL) are Extracellular-facing. An intramembrane region (helical) is located at residues 558-571 (PMMVAVILANMVAQ). Residues 572–575 (SLQP) constitute an intramembrane region (note=Loop between two helices). Residues 576-578 (SLY) constitute an intramembrane region (helical). Residue Tyr-578 participates in chloride binding. At 579–988 (DSIIQVKKLP…DEEDEDELIL (410 aa)) the chain is on the cytoplasmic side. The CBS 1 domain occupies 609–668 (MVRDVKFVSASYTYGELRTLLQTTTVKTLPLVDSKDSMILLGSVERSELQALLQRHLCPE). The tract at residues 713–764 (EDEDEDLSGKSELPPSLALHPSTTAPLSPEEPNGPLPGHKQQPEAPEPAGQR) is disordered. In terms of domain architecture, CBS 2 spans 821–876 (IDQSPFQLVEQTTLHKTHTLFSLLGLHLAYVTSMGKLRGVLALEELQKAIEGHTKS). The interval 880-988 (LRPPLASFRN…DEEDEDELIL (109 aa)) is disordered. A Phosphoserine modification is found at Ser-886. Positions 887 to 906 (FRNTTSTRKSTGAPPSSAEN) are enriched in polar residues. A compositionally biased stretch (pro residues) spans 929 to 941 (TPVPSPSPEPPLS). Acidic residues-rich tracts occupy residues 950-967 (ELEELELVESPGLEEELA) and 979-988 (DEEDEDELIL).

The protein belongs to the chloride channel (TC 2.A.49) family. ClC-1/CLCN1 subfamily. In terms of assembly, homodimer. Predominantly expressed in skeletal muscles.

The protein localises to the cell membrane. The protein resides in the sarcolemma. It is found in the T-tubule. The catalysed reaction is chloride(in) = chloride(out). It carries out the reaction thiocyanate(in) = thiocyanate(out). It catalyses the reaction bromide(in) = bromide(out). The enzyme catalyses nitrate(in) = nitrate(out). The catalysed reaction is iodide(out) = iodide(in). Its activity is regulated as follows. Modulated by membrane voltage with depolarization favouring channel opening and hyperpolarization favouring channel closure. Inhibited by acidic pH and ATP binding due to a shift of voltage dependence of common gating to more positive voltages. Inhibited by 9-anthracene-carboxylic. Voltage-gated chloride channel involved in skeletal muscle excitability. Generates most of the plasma membrane chloride conductance in skeletal muscle fibers, stabilizes the resting membrane potential and contributes to the repolarization phase during action potential firing. Forms a homodimeric channel where each subunit has its own ion conduction pathway. Conducts double-barreled currents controlled by two types of gates, two fast glutamate gates that control each subunit independently and a slow common gate that opens and shuts off both subunits simultaneously. Has a significant open probability at muscle resting potential and is further activated upon membrane depolarization. Permeable to small monovalent anions with ion selectivity for chloride &gt; thiocyanate &gt; bromide &gt; nitrate &gt; iodide. The chain is Chloride channel protein 1 from Homo sapiens (Human).